The sequence spans 498 residues: ATP synthase subunit beta, chloroplastic (498 aa).

172–179 contacts ATP; the sequence is GGAGVGKT.

It belongs to the ATPase alpha/beta chains family. As to quaternary structure, F-type ATPases have 2 components, CF(1) - the catalytic core - and CF(0) - the membrane proton channel. CF(1) has five subunits: alpha(3), beta(3), gamma(1), delta(1), epsilon(1). CF(0) has four main subunits: a(1), b(1), b'(1) and c(9-12).

It localises to the plastid. The protein resides in the chloroplast thylakoid membrane. The enzyme catalyses ATP + H2O + 4 H(+)(in) = ADP + phosphate + 5 H(+)(out). Produces ATP from ADP in the presence of a proton gradient across the membrane. The catalytic sites are hosted primarily by the beta subunits. The polypeptide is ATP synthase subunit beta, chloroplastic (Phormium tenax (New Zealand flax)).